Here is a 339-residue protein sequence, read N- to C-terminus: Ketol-acid reductoisomerase (NADP(+)) (339 aa).

The 182-residue stretch at 1 to 182 (MRVYYDRDAD…GGGRAGIIET (182 aa)) folds into the KARI N-terminal Rossmann domain. Residues 24–27 (YGSQ), R48, S51, S53, and 83–86 (DELQ) each bind NADP(+). H108 is an active-site residue. An NADP(+)-binding site is contributed by G134. The KARI C-terminal knotted domain occupies 183 to 328 (TFREECETDL…AKLRDMMPWI (146 aa)). Residues D191, E195, E227, and E231 each contribute to the Mg(2+) site. S252 serves as a coordination point for substrate.

It belongs to the ketol-acid reductoisomerase family. It depends on Mg(2+) as a cofactor.

The enzyme catalyses (2R)-2,3-dihydroxy-3-methylbutanoate + NADP(+) = (2S)-2-acetolactate + NADPH + H(+). The catalysed reaction is (2R,3R)-2,3-dihydroxy-3-methylpentanoate + NADP(+) = (S)-2-ethyl-2-hydroxy-3-oxobutanoate + NADPH + H(+). It functions in the pathway amino-acid biosynthesis; L-isoleucine biosynthesis; L-isoleucine from 2-oxobutanoate: step 2/4. Its pathway is amino-acid biosynthesis; L-valine biosynthesis; L-valine from pyruvate: step 2/4. In terms of biological role, involved in the biosynthesis of branched-chain amino acids (BCAA). Catalyzes an alkyl-migration followed by a ketol-acid reduction of (S)-2-acetolactate (S2AL) to yield (R)-2,3-dihydroxy-isovalerate. In the isomerase reaction, S2AL is rearranged via a Mg-dependent methyl migration to produce 3-hydroxy-3-methyl-2-ketobutyrate (HMKB). In the reductase reaction, this 2-ketoacid undergoes a metal-dependent reduction by NADPH to yield (R)-2,3-dihydroxy-isovalerate. This Nitrobacter hamburgensis (strain DSM 10229 / NCIMB 13809 / X14) protein is Ketol-acid reductoisomerase (NADP(+)).